A 537-amino-acid polypeptide reads, in one-letter code: MEFRMSKTSPSHFFNYSASKKLQELAKHPLDLTKELTPERVTQYVAEAGGFKLLYGTERVTNDVLAALKQLSEESHALDKMNRMQDGEVMNFIERFPSENRPALHTATRDLFDYPRTAKKAQEAAQLAKAELEKLRQFLEKNDQNYHFTDLVTVAIGGSDLGPRAHYHALEHLLKPGHHVHFISNVDPDDVAGVFRKIPDLKRTLVAVVSKSGTTLETATNEELVREKFRQAGLDPKKHFVSITMPGTPMDNQEQYLKTFYMWDWIGGRYSTTSMCGALMLSFAFGINTFWEFLKGAHEMDRIALETNLNKNLPLLAALLGIWNRNFLDYPTVALIPYSQALLRYTAHIQQVDMESNGKHIDQQGIMTNFHTGPIIWGEPGTNSQHSFFQLIHQGTATVPVSIIAFKENLYGEDLEFQGTTSQEKLLSNLFAQSLALATGQISENPNKTFLGNRPTNILLAKKLTPYTLGALLSFFENKVAFQGFIWGINSFDQEGVQLGKVLANRLINEFANQRKKTKPSSFAIGEAYLKHLDHFS.

Residue Glu355 is the Proton donor of the active site. Catalysis depends on residues His386 and Lys501.

This sequence belongs to the GPI family.

The protein localises to the cytoplasm. It catalyses the reaction alpha-D-glucose 6-phosphate = beta-D-fructose 6-phosphate. It participates in carbohydrate biosynthesis; gluconeogenesis. It functions in the pathway carbohydrate degradation; glycolysis; D-glyceraldehyde 3-phosphate and glycerone phosphate from D-glucose: step 2/4. Functionally, catalyzes the reversible isomerization of glucose-6-phosphate to fructose-6-phosphate. In Protochlamydia amoebophila (strain UWE25), this protein is Glucose-6-phosphate isomerase.